A 260-amino-acid polypeptide reads, in one-letter code: MILDDLVAVTKIRLARHQRQQSLADLKQTVAKMPRNHKPDFLTRLKQPGLHVIAEVKKASPSKGTIVTDFPYLAIAKAYDQAGADAISVLTEPDYFNGHLHYLKEISQQVSVPTLRKDFTIDPYMIYEAKANGAVIILLIVAILTDQQLRDYRQLAEKLGMHAIVEAYTAAEVTRALQSGAKIIGINNRNLKDFRVDFNNSLKLRAMVPDNIPVVAESGIKTQEDVEKLAAAGFNAILIGETLMRSNQKRQLIAAFKERA.

Belongs to the TrpC family.

It catalyses the reaction 1-(2-carboxyphenylamino)-1-deoxy-D-ribulose 5-phosphate + H(+) = (1S,2R)-1-C-(indol-3-yl)glycerol 3-phosphate + CO2 + H2O. It participates in amino-acid biosynthesis; L-tryptophan biosynthesis; L-tryptophan from chorismate: step 4/5. The polypeptide is Indole-3-glycerol phosphate synthase (Lacticaseibacillus paracasei (strain ATCC 334 / BCRC 17002 / CCUG 31169 / CIP 107868 / KCTC 3260 / NRRL B-441) (Lactobacillus paracasei)).